We begin with the raw amino-acid sequence, 150 residues long: Transcriptional regulator MraZ (150 aa).

2 consecutive SpoVT-AbrB domains span residues Thr-11–Glu-53 and Ala-82–Thr-125.

Belongs to the MraZ family. Forms oligomers.

The protein localises to the cytoplasm. Its subcellular location is the nucleoid. This is Transcriptional regulator MraZ from Bifidobacterium longum (strain NCC 2705).